Here is a 213-residue protein sequence, read N- to C-terminus: Imidazole glycerol phosphate synthase subunit HisH (213 aa).

The 212-residue stretch at 1–212 (MLAILDYKAG…HRYCTEAADA (212 aa)) folds into the Glutamine amidotransferase type-1 domain. C79 acts as the Nucleophile in catalysis. Catalysis depends on residues H187 and E189.

In terms of assembly, heterodimer of HisH and HisF.

The protein localises to the cytoplasm. The enzyme catalyses 5-[(5-phospho-1-deoxy-D-ribulos-1-ylimino)methylamino]-1-(5-phospho-beta-D-ribosyl)imidazole-4-carboxamide + L-glutamine = D-erythro-1-(imidazol-4-yl)glycerol 3-phosphate + 5-amino-1-(5-phospho-beta-D-ribosyl)imidazole-4-carboxamide + L-glutamate + H(+). It catalyses the reaction L-glutamine + H2O = L-glutamate + NH4(+). It participates in amino-acid biosynthesis; L-histidine biosynthesis; L-histidine from 5-phospho-alpha-D-ribose 1-diphosphate: step 5/9. In terms of biological role, IGPS catalyzes the conversion of PRFAR and glutamine to IGP, AICAR and glutamate. The HisH subunit catalyzes the hydrolysis of glutamine to glutamate and ammonia as part of the synthesis of IGP and AICAR. The resulting ammonia molecule is channeled to the active site of HisF. The polypeptide is Imidazole glycerol phosphate synthase subunit HisH (Nitratidesulfovibrio vulgaris (strain ATCC 29579 / DSM 644 / CCUG 34227 / NCIMB 8303 / VKM B-1760 / Hildenborough) (Desulfovibrio vulgaris)).